The sequence spans 546 residues: Thermosome subunit beta (546 aa).

The protein belongs to the TCP-1 chaperonin family. Forms a Heterooligomeric complex of two stacked eight-membered rings.

Functionally, molecular chaperone; binds unfolded polypeptides in vitro, and has a weak ATPase activity. The polypeptide is Thermosome subunit beta (thsB) (Thermococcus kodakarensis (strain ATCC BAA-918 / JCM 12380 / KOD1) (Pyrococcus kodakaraensis (strain KOD1))).